A 511-amino-acid polypeptide reads, in one-letter code: Probable dolichyl pyrophosphate Glc1Man9GlcNAc2 alpha-1,3-glucosyltransferase (511 aa).

The next 11 membrane-spanning stretches (helical) occupy residues L4–H24, V94–V112, D124–V144, Y151–F171, V210–V230, P300–V320, L332–V352, A356–V370, Y377–F394, W432–L452, and Y469–G491.

Belongs to the ALG6/ALG8 glucosyltransferase family.

The protein resides in the endoplasmic reticulum membrane. The enzyme catalyses an alpha-D-Glc-(1-&gt;3)-alpha-D-Man-(1-&gt;2)-alpha-D-Man-(1-&gt;2)-alpha-D-Man-(1-&gt;3)-[alpha-D-Man-(1-&gt;2)-alpha-D-Man-(1-&gt;3)-[alpha-D-Man-(1-&gt;2)-alpha-D-Man-(1-&gt;6)]-alpha-D-Man-(1-&gt;6)]-beta-D-Man-(1-&gt;4)-beta-D-GlcNAc-(1-&gt;4)-alpha-D-GlcNAc-diphospho-di-trans,poly-cis-dolichol + a di-trans,poly-cis-dolichyl beta-D-glucosyl phosphate = an alpha-D-Glc-(1-&gt;3)-alpha-D-Glc-(1-&gt;3)-alpha-D-Man-(1-&gt;2)-alpha-D-Man-(1-&gt;2)-alpha-D-Man-(1-&gt;3)-[alpha-D-Man-(1-&gt;2)-alpha-D-Man-(1-&gt;3)-[alpha-D-Man-(1-&gt;2)-alpha-D-Man-(1-&gt;6)]-alpha-D-Man-(1-&gt;6)]-beta-D-Man-(1-&gt;4)-beta-D-GlcNAc-(1-&gt;4)-alpha-D-GlcNAc-diphospho-di-trans,poly-cis-dolichol + a di-trans,poly-cis-dolichyl phosphate + H(+). The protein operates within protein modification; protein glycosylation. In terms of biological role, adds the second glucose residue to the lipid-linked oligosaccharide precursor for N-linked glycosylation. Transfers glucose from dolichyl phosphate glucose (Dol-P-Glc) onto the lipid-linked oligosaccharide Glc(1)Man(9)GlcNAc(2)-PP-Dol. Functions in developmental processes such as germband extension, the apical constriction of mesoderm precursor cells and ventral furrow formation in early embryogenesis prior to gastrulation. Involved in the glycosylation and intracellular distribution of shg (E-cadherin). Function in cell intercalation in the lateral epidermis during germband extension may be due to its effect on shg. The sequence is that of Probable dolichyl pyrophosphate Glc1Man9GlcNAc2 alpha-1,3-glucosyltransferase from Drosophila melanogaster (Fruit fly).